Here is a 294-residue protein sequence, read N- to C-terminus: Acetylglutamate kinase (294 aa).

Substrate-binding positions include 60–61, Arg-82, and Asn-186; that span reads GG.

It belongs to the acetylglutamate kinase family. ArgB subfamily.

The protein localises to the cytoplasm. It carries out the reaction N-acetyl-L-glutamate + ATP = N-acetyl-L-glutamyl 5-phosphate + ADP. Its pathway is amino-acid biosynthesis; L-arginine biosynthesis; N(2)-acetyl-L-ornithine from L-glutamate: step 2/4. Catalyzes the ATP-dependent phosphorylation of N-acetyl-L-glutamate. The chain is Acetylglutamate kinase from Methanospirillum hungatei JF-1 (strain ATCC 27890 / DSM 864 / NBRC 100397 / JF-1).